The primary structure comprises 529 residues: Intraflagellar transport protein 56 (529 aa).

The segment at 1 to 21 (MLHNRMTTAFERSKEQEHEAA) is disordered. Over residues 11 to 21 (ERSKEQEHEAA) the composition is skewed to basic and acidic residues. 6 TPR repeats span residues 57 to 90 (GNAD…KNPP), 154 to 187 (SADQ…QPEC), 189 to 221 (AIYM…AEDS), 285 to 321 (SEAR…EYTL), 359 to 392 (VLGR…PKES), and 428 to 461 (PVHR…SLQT).

This sequence belongs to the IFT56 family.

It is found in the cell projection. It localises to the cilium. The protein resides in the flagellum. Its subcellular location is the cytoplasm. The protein localises to the cytoskeleton. It is found in the flagellum axoneme. It localises to the flagellum basal body. Its function is as follows. Component of the intraflagellar transport complex B (IFT-B) involved in flagellar assembly. The sequence is that of Intraflagellar transport protein 56 from Giardia intestinalis (strain ATCC 50803 / WB clone C6) (Giardia lamblia).